The primary structure comprises 434 residues: Probable exopolygalacturonase A (434 aa).

The first 19 residues, 1 to 19 (MKLPILVTLFITLPALCVS), serve as a signal peptide directing secretion. 5 N-linked (GlcNAc...) asparagine glycosylation sites follow: Asn-46, Asn-57, Asn-106, Asn-199, and Asn-207. A PbH1 1 repeat occupies 232-253 (SSNIVIQDSRIVNTDDCVSFKP). Asp-246 functions as the Proton donor in the catalytic mechanism. A disulfide bridge connects residues Cys-248 and Cys-265. N-linked (GlcNAc...) asparagine glycosylation occurs at Asn-254. Residues 255–275 (STQIVIQNLDCTGSHGISVGS) form a PbH1 2 repeat. Residue His-269 is part of the active site. N-linked (GlcNAc...) asparagine glycans are attached at residues Asn-293, Asn-329, and Asn-354. Cys-392 and Cys-398 are joined by a disulfide. The N-linked (GlcNAc...) asparagine glycan is linked to Asn-400.

This sequence belongs to the glycosyl hydrolase 28 family.

Its subcellular location is the secreted. The catalysed reaction is [(1-&gt;4)-alpha-D-galacturonosyl](n) + H2O = alpha-D-galacturonate + [(1-&gt;4)-alpha-D-galacturonosyl](n-1). In terms of biological role, specific in hydrolyzing the terminal glycosidic bond of polygalacturonic acid and oligogalacturonates. In Aspergillus niger (strain ATCC MYA-4892 / CBS 513.88 / FGSC A1513), this protein is Probable exopolygalacturonase A (pgxA).